The following is a 283-amino-acid chain: F-box only protein 27 (283 aa).

The disordered stretch occupies residues 1–23 (MGASVSRGRAARVPAPEPEPEEA). An F-box domain is found at 23 to 70 (ALDLSQLPPELLLVVLSHVPPRTLLGRCRQVCRGWRALVDGQALWLLI). The 177-residue stretch at 104–280 (FCARRPIGRN…VTNSSVIVRV (177 aa)) folds into the FBA domain.

As to quaternary structure, part of a SCF (SKP1-cullin-F-box) protein ligase complex. Interacts with SKP1 and CUL1. In terms of tissue distribution, predominantly expressed in brain, heart and kidney. Expressed at lower levels in liver and lung.

Functionally, substrate-recognition component of the SCF (SKP1-CUL1-F-box protein)-type E3 ubiquitin ligase complex. Able to recognize and bind denatured glycoproteins, which are modified with complex-type oligosaccharides. The sequence is that of F-box only protein 27 (FBXO27) from Homo sapiens (Human).